Consider the following 267-residue polypeptide: WUSCHEL-related homeobox 8 (267 aa).

A DNA-binding region (homeobox; WUS-type) is located at residues 88 to 152 (TARQRWTPTP…NRRARSKRKQ (65 aa)). Residues 148-195 (SKRKQAALPNNNAESEAEADEESPTDKKPKSDRPLHQNIAMRDHNSER) form a disordered region. Basic and acidic residues predominate over residues 171–195 (PTDKKPKSDRPLHQNIAMRDHNSER).

Belongs to the WUS homeobox family.

The protein resides in the nucleus. Transcription factor which may be involved in developmental processes. This Oryza sativa subsp. japonica (Rice) protein is WUSCHEL-related homeobox 8 (WOX8).